Here is a 630-residue protein sequence, read N- to C-terminus: PAN2-PAN3 deadenylation complex subunit PAN3 (630 aa).

The segment at 7–36 adopts a C3H1-type zinc-finger fold; sequence SAKDTLCKNILIYGYCKFENKGCAFSHHKP. Disordered stretches follow at residues 38 to 72 and 135 to 171; these read VGQPPVSASSSSGYSGNSSPAEAKRKFNLNTPSFQ and GFGSEYPSSPNTSGAGQPPNPYLTGNGHPASMAQSSG. The span at 44–56 shows a compositional bias: low complexity; that stretch reads SASSSSGYSGNSS. Polar residues predominate over residues 140 to 149; sequence YPSSPNTSGA. The pseudokinase domain stretch occupies residues 231–501; it reads QTLPRSNLPE…LDRFSQRYLT (271 aa). ATP-binding positions include arginine 283, 333 to 340, and 388 to 389; these read DYFPNSST and TK. Positions 502–540 form a coiled coil; it reads TRLFSTINNLEDSTDFMESQITTELENARLFRLLTKLNF. The knob domain stretch occupies residues 541–630; that stretch reads IIDRPEAKDW…DSVFRNLTRD (90 aa).

Belongs to the protein kinase superfamily. PAN3 family. Homodimer. Forms a heterotrimer with a catalytic subunit PAN2 to form the poly(A)-nuclease (PAN) deadenylation complex. Interacts (via PAM-2 motif) with poly(A)-binding protein PAB1 (via PABC domain), conferring substrate specificity of the enzyme complex.

Its subcellular location is the cytoplasm. Its function is as follows. Regulatory subunit of the poly(A)-nuclease (PAN) deadenylation complex, one of two cytoplasmic mRNA deadenylases involved in mRNA turnover. PAN specifically shortens poly(A) tails of RNA and the activity is stimulated by poly(A)-binding protein PAB1. PAN deadenylation is followed by rapid degradation of the shortened mRNA tails by the CCR4-NOT complex. Deadenylated mRNAs are then degraded by two alternative mechanisms, namely exosome-mediated 3'-5' exonucleolytic degradation, or deadenylation-dependent mRNA decaping and subsequent 5'-3' exonucleolytic degradation by XRN1. May also be involved in post-transcriptional maturation of mRNA poly(A) tails. PAN3 acts as a positive regulator for PAN activity, recruiting the catalytic subunit PAN2 to mRNA via its interaction with RNA and with PAB1. The protein is PAN2-PAN3 deadenylation complex subunit PAN3 of Scheffersomyces stipitis (strain ATCC 58785 / CBS 6054 / NBRC 10063 / NRRL Y-11545) (Yeast).